A 300-amino-acid polypeptide reads, in one-letter code: tRNA-cytidine(32) 2-sulfurtransferase (300 aa).

The short motif at 41–46 (SGGKDS) is the PP-loop motif element. Cysteine 116, cysteine 119, and cysteine 207 together coordinate [4Fe-4S] cluster.

Belongs to the TtcA family. Homodimer. Requires Mg(2+) as cofactor. [4Fe-4S] cluster serves as cofactor.

The protein resides in the cytoplasm. The catalysed reaction is cytidine(32) in tRNA + S-sulfanyl-L-cysteinyl-[cysteine desulfurase] + AH2 + ATP = 2-thiocytidine(32) in tRNA + L-cysteinyl-[cysteine desulfurase] + A + AMP + diphosphate + H(+). Its pathway is tRNA modification. Its function is as follows. Catalyzes the ATP-dependent 2-thiolation of cytidine in position 32 of tRNA, to form 2-thiocytidine (s(2)C32). The sulfur atoms are provided by the cysteine/cysteine desulfurase (IscS) system. The polypeptide is tRNA-cytidine(32) 2-sulfurtransferase (Idiomarina loihiensis (strain ATCC BAA-735 / DSM 15497 / L2-TR)).